Reading from the N-terminus, the 154-residue chain is MQILRIAQLMALLATCASALPTSTGSRVYSRDVDQTQGGFSGSPTTNSPDSVAETGRLEARSGGSSSTETEKERKKRIKAEQNARIRQEEINRKPYQCPYCSDPTVFSHSDALGRHIYTIHRGMPIYNAKDPRKTAIPYNPPGRSTSIFGSEPF.

Residues 1 to 19 (MQILRIAQLMALLATCASA) form the signal peptide. The disordered stretch occupies residues 24–85 (TGSRVYSRDV…KRIKAEQNAR (62 aa)). Over residues 35 to 50 (QTQGGFSGSPTTNSPD) the composition is skewed to polar residues. The segment covering 69–85 (ETEKERKKRIKAEQNAR) has biased composition (basic and acidic residues). Residues 96–121 (YQCPYCSDPTVFSHSDALGRHIYTIH) form a C2H2-type; degenerate zinc finger.

It localises to the secreted. Its subcellular location is the host nucleus. Probable secreted effector that translocates into the nuclei of host cells to reprogram the expression of targeted genes by binding on effector binding elements in rice. The sequence is that of Host transcription reprogramming factor 5 from Pyricularia oryzae (strain 70-15 / ATCC MYA-4617 / FGSC 8958) (Rice blast fungus).